Consider the following 200-residue polypeptide: High mobility group protein 1 homolog (200 aa).

DNA-binding regions (HMG box) lie at residues 11–81 (PRGR…QSYK) and 100–168 (PKRN…AEYK). Over residues 64 to 86 (EKSMRDKVRYDREMQSYKPPKGE) the composition is skewed to basic and acidic residues. Disordered regions lie at residues 64–103 (EKSM…PKRN) and 169–200 (AKAK…DDSD). The span at 190–200 (SSDDSSSDDSD) shows a compositional bias: acidic residues.

Belongs to the HMGB family.

It is found in the nucleus. The protein localises to the chromosome. Binds preferentially single-stranded DNA and unwinds double-stranded DNA. This Strongylocentrotus purpuratus (Purple sea urchin) protein is High mobility group protein 1 homolog (HMG1).